The sequence spans 96 residues: UPF0213 protein BCE33L0031 (96 aa).

Positions 4-79 (NKHCFYVVEC…KQLNRKQKEE (76 aa)) constitute a GIY-YIG domain.

It belongs to the UPF0213 family.

In Bacillus cereus (strain ZK / E33L), this protein is UPF0213 protein BCE33L0031.